The primary structure comprises 412 residues: Tyrosine--tRNA ligase (412 aa).

Tyrosine 31 contacts L-tyrosine. The 'HIGH' region signature appears at 36–45 (PTAASLHIGH). Residues tyrosine 162 and glutamine 166 each coordinate L-tyrosine. Positions 222-226 (KIGKT) match the 'KMSKS' region motif. Lysine 225 is a binding site for ATP. Residues 345–412 (KRWIDLFVGV…KKKKLVLHLI (68 aa)) enclose the S4 RNA-binding domain.

The protein belongs to the class-I aminoacyl-tRNA synthetase family. TyrS type 1 subfamily. As to quaternary structure, homodimer.

It is found in the cytoplasm. The catalysed reaction is tRNA(Tyr) + L-tyrosine + ATP = L-tyrosyl-tRNA(Tyr) + AMP + diphosphate + H(+). Catalyzes the attachment of tyrosine to tRNA(Tyr) in a two-step reaction: tyrosine is first activated by ATP to form Tyr-AMP and then transferred to the acceptor end of tRNA(Tyr). The chain is Tyrosine--tRNA ligase from Chlamydia caviae (strain ATCC VR-813 / DSM 19441 / 03DC25 / GPIC) (Chlamydophila caviae).